The sequence spans 138 residues: Acidic phospholipase A2 inhibitor vaspin A chain (138 aa).

The first 16 residues, 1-16, serve as a signal peptide directing secretion; the sequence is MRTLWIVAVCLIGVEG. 7 disulfides stabilise this stretch: cysteine 42-cysteine 131, cysteine 44-cysteine 60, cysteine 59-cysteine 111, cysteine 65-cysteine 138, cysteine 66-cysteine 104, cysteine 73-cysteine 97, and cysteine 91-cysteine 102.

The protein belongs to the phospholipase A2 family. Group II subfamily. D49 sub-subfamily. Heterodimer of a toxic basic protein having phospholipase A2 activity (B chain (AC Q8JFG0)) and a non-toxic acidic protein functioning as its inhibitor (A chain). As to expression, expressed by the venom gland.

The protein resides in the secreted. Heterodimer: postsynaptic neurotoxin. In terms of biological role, monomer: the acidic chain inhibits the basic phospholipase A2 of the complex. In Vipera aspis aspis (Aspic viper), this protein is Acidic phospholipase A2 inhibitor vaspin A chain.